A 129-amino-acid chain; its full sequence is RxLR effector protein PexRD43 (129 aa).

Positions Met-1 to Gly-16 are cleaved as a signal peptide. The RxLR-dEER signature appears at Arg-44–Arg-56.

It belongs to the RxLR effector family.

The protein resides in the secreted. Its subcellular location is the host cytoplasm. The protein localises to the host nucleus. Functionally, effector that enhances P.infestans colonization of Nicotiana benthamiana leaves. The polypeptide is RxLR effector protein PexRD43 (Phytophthora infestans (strain T30-4) (Potato late blight agent)).